We begin with the raw amino-acid sequence, 70 residues long: MAKVDIHPIWYPDAKVYCDGQLIMTIGSTKPELHVDIWSGNHPFFTGSQRIIDTEGRVERFMRKYKMEKD.

This sequence belongs to the bacterial ribosomal protein bL31 family. Type A subfamily. In terms of assembly, part of the 50S ribosomal subunit.

It is found in the plastid. It localises to the chloroplast. In terms of biological role, binds the 23S rRNA. The sequence is that of Large ribosomal subunit protein bL31c from Porphyra purpurea (Red seaweed).